Reading from the N-terminus, the 79-residue chain is Acyl carrier protein (79 aa).

The Carrier domain maps to 2–77; the sequence is SEIGERVKKI…DATKFLEKNA (76 aa). Position 37 is an O-(pantetheine 4'-phosphoryl)serine (Ser-37).

The protein belongs to the acyl carrier protein (ACP) family. In terms of processing, 4'-phosphopantetheine is transferred from CoA to a specific serine of apo-ACP by AcpS. This modification is essential for activity because fatty acids are bound in thioester linkage to the sulfhydryl of the prosthetic group.

It localises to the cytoplasm. The protein operates within lipid metabolism; fatty acid biosynthesis. Functionally, carrier of the growing fatty acid chain in fatty acid biosynthesis. This is Acyl carrier protein from Rhodopseudomonas palustris (strain HaA2).